The primary structure comprises 463 residues: MQKQKQELHRGLEERHISLMSLGAAIGVGLFLGSASAIQLAGPGILVAYAASGLVMFFIMRALGEMAIQKPVAGSFSRYARDYLGPLAGYLTGWNYWFLWVVTCMAEITAVGIYMGFWFPDVPNWIWALSALVIMTGVNFLAVKAYGELEFWFALIKIVAILSMIAVGLLMIIAGVGNGGIATGISNLWNNGGFFPHGLKGVLLSLQMVMFAYLGIEMIGVTAGEVKNPQKSLAKAIDTVFWRILIFYVGALFVIMSIYPWQEIGSQGSPFVLTFQKVGIPSAAGIINFVVLTAALSSCNSGIFSTGRMLFNLAEQKEAPQAYGQLTKGGIPGKAVLASAGALLVGVLLNYVVPAKVFTWVTSIATFGAIWTWAIILLSQIKYRKSLKPEEKKQLKYKMPLFPFTSYVSLAFLAFVVILMAYSPDTRVAVIIGPIWFLILLAVYYGKGFHKKNAAAASERNIS.

The next 12 helical transmembrane spans lie at 17–37, 40–60, 97–117, 122–142, 153–173, 201–221, 244–264, 278–298, 335–355, 357–377, 401–421, and 429–449; these read ISLMSLGAAIGVGLFLGSASA, LAGPGILVAYAASGLVMFFIM, WFLWVVTCMAEITAVGIYMGF, VPNWIWALSALVIMTGVNFLA, FALIKIVAILSMIAVGLLMII, GVLLSLQMVMFAYLGIEMIGV, ILIFYVGALFVIMSIYPWQEI, VGIPSAAGIINFVVLTAALSS, AVLASAGALLVGVLLNYVVPA, VFTWVTSIATFGAIWTWAIIL, LFPFTSYVSLAFLAFVVILMA, and AVIIGPIWFLILLAVYYGKGF.

This sequence belongs to the amino acid-polyamine-organocation (APC) superfamily.

Its subcellular location is the cell membrane. This is an uncharacterized protein from Bacillus subtilis (strain 168).